The following is a 358-amino-acid chain: Chorismate synthase (358 aa).

R47 provides a ligand contact to NADP(+). FMN-binding positions include 124–126 (RSS), 240–241 (NA), G284, 299–303 (KPIAT), and R325.

This sequence belongs to the chorismate synthase family. As to quaternary structure, homotetramer. It depends on FMNH2 as a cofactor.

The catalysed reaction is 5-O-(1-carboxyvinyl)-3-phosphoshikimate = chorismate + phosphate. It participates in metabolic intermediate biosynthesis; chorismate biosynthesis; chorismate from D-erythrose 4-phosphate and phosphoenolpyruvate: step 7/7. Functionally, catalyzes the anti-1,4-elimination of the C-3 phosphate and the C-6 proR hydrogen from 5-enolpyruvylshikimate-3-phosphate (EPSP) to yield chorismate, which is the branch point compound that serves as the starting substrate for the three terminal pathways of aromatic amino acid biosynthesis. This reaction introduces a second double bond into the aromatic ring system. In Bacteroides thetaiotaomicron (strain ATCC 29148 / DSM 2079 / JCM 5827 / CCUG 10774 / NCTC 10582 / VPI-5482 / E50), this protein is Chorismate synthase.